The following is a 421-amino-acid chain: MTLIRRVAFLSLHTSPMEQPGSGDAGGMNVYVRALASALAASGVEVEIFTRSTSSGQPAVEHPDPGVCVHNVISGPPRKLPKEELPELLHSMVAEIERIRQRQPHGRYDLIHSHYWVSGVAGLELSRLWGVPLVHTMHTMAKVKNLLLQSGEKPEPRRREDGELRIVDGATRLIANTPAEAAELVSHYNADFDHIDVAPPGVDLTVFTPAFRPRSRAQLGVPAGKFHLLFAGRIQRLKGPQVLVKAAALLRSRRPDIDLQVTILGALSGAKDFDLKSLISAAGMDDVVTHHPPVNAPELAGWFRSADVVVMPSYSESFGLVALEAQACGTPVVATRVGGLSRAIFDGRTGLLVDGHKAADWADVLEALYDDPATRGDMGRAAALHAQGFGWQRTAAITLESYHAAVDQYIDSHRIPVGHSP.

1D-myo-inositol 3-phosphate is bound at residue histidine 13. Residues 19–20 (QP) and glycine 27 contribute to the UDP-N-acetyl-alpha-D-glucosamine site. 1D-myo-inositol 3-phosphate-binding positions include 24-29 (DAGGMN), lysine 82, tyrosine 115, threonine 139, and arginine 159. Arginine 233, lysine 238, and valine 294 together coordinate UDP-N-acetyl-alpha-D-glucosamine. Residues phenylalanine 303, arginine 304, and alanine 306 each coordinate Mg(2+). 2 residues coordinate UDP-N-acetyl-alpha-D-glucosamine: glutamate 316 and glutamate 324. Threonine 330 contributes to the Mg(2+) binding site.

It belongs to the glycosyltransferase group 1 family. MshA subfamily. Homodimer.

It catalyses the reaction 1D-myo-inositol 3-phosphate + UDP-N-acetyl-alpha-D-glucosamine = 1D-myo-inositol 2-acetamido-2-deoxy-alpha-D-glucopyranoside 3-phosphate + UDP + H(+). Its function is as follows. Catalyzes the transfer of a N-acetyl-glucosamine moiety to 1D-myo-inositol 3-phosphate to produce 1D-myo-inositol 2-acetamido-2-deoxy-glucopyranoside 3-phosphate in the mycothiol biosynthesis pathway. The polypeptide is D-inositol 3-phosphate glycosyltransferase (Arthrobacter sp. (strain FB24)).